The primary structure comprises 543 residues: Ribonuclease Y (543 aa).

Residues 4-24 (IIMIPVATAIVSLLVGTVIGY) form a helical membrane-spanning segment. Residues 233–296 (TVSVVDLPNE…EIAKRAMERL (64 aa)) form the KH domain. The 94-residue stretch at 359 to 452 (VLSHSIEVGK…VVAADTISSA (94 aa)) folds into the HD domain.

This sequence belongs to the RNase Y family.

Its subcellular location is the cell membrane. In terms of biological role, endoribonuclease that initiates mRNA decay. This is Ribonuclease Y from Lactobacillus helveticus (strain DPC 4571).